The sequence spans 432 residues: Keratin, type I cytoskeletal 18-B (432 aa).

A compositionally biased stretch (low complexity) spans Met1–Ser21. A disordered region spans residues Met1–Ser44. The tract at residues Ser2–Asn82 is head. The segment at Glu83–His118 is coil 1A. Residues Glu83–Leu393 form the IF rod domain. The segment at Thr119–Ala134 is linker 1. The coil 1B stretch occupies residues Ile135 to Leu226. A linker 12 region spans residues Gln227–Ile250. Residues Met251–Gly388 are coil 2. The tail stretch occupies residues Asp389 to Ala432.

The protein belongs to the intermediate filament family. Heterotetramer of two type I and two type II keratins. Keratin-18 associates with keratin-8. Post-translationally, phosphorylated. Proteolytically cleaved by caspases during epithelial cell apoptosis.

Its function is as follows. When phosphorylated, plays a role in filament reorganization. The chain is Keratin, type I cytoskeletal 18-B (krt18-b) from Xenopus laevis (African clawed frog).